A 159-amino-acid chain; its full sequence is Nucleotide-binding protein Pmen_0939 (159 aa).

This sequence belongs to the YajQ family.

Its function is as follows. Nucleotide-binding protein. The polypeptide is Nucleotide-binding protein Pmen_0939 (Ectopseudomonas mendocina (strain ymp) (Pseudomonas mendocina)).